The primary structure comprises 306 residues: MRVVFMGTPEFSVPILTAIIGHGYEVVAAYTQPPRPAGRRGLELTRSPVHEKAEQFGIPVFTPKSLKGAEEQDVFASLKADVAIVVAYGLLLPKAILDAPRLGCYNGHASLLPRWRGAAPIQRAIMAGDAETGMMIMKMDEGLDTGPVAMAEKVAITPDMTAGELHDRLSMIGADLMIRALGALERESLALQPQAEEGVTYAAKIDKAEARIDWSKPAKDVHNSIRGLSPFPGAWCEMEINGAVERVKLQRSTLGEGSGAPGTVLDDRLTIACGEGAVRLATLQRSGGKPLPAQEFLRGQRVTKVL.

110–113 is a (6S)-5,6,7,8-tetrahydrofolate binding site; sequence SLLP.

It belongs to the Fmt family.

It catalyses the reaction L-methionyl-tRNA(fMet) + (6R)-10-formyltetrahydrofolate = N-formyl-L-methionyl-tRNA(fMet) + (6S)-5,6,7,8-tetrahydrofolate + H(+). In terms of biological role, attaches a formyl group to the free amino group of methionyl-tRNA(fMet). The formyl group appears to play a dual role in the initiator identity of N-formylmethionyl-tRNA by promoting its recognition by IF2 and preventing the misappropriation of this tRNA by the elongation apparatus. In Brucella melitensis biotype 2 (strain ATCC 23457), this protein is Methionyl-tRNA formyltransferase.